The primary structure comprises 282 residues: Undecaprenyl-diphosphatase (282 aa).

8 helical membrane passes run Met-1–Ile-21, Gly-40–Ala-60, Trp-89–Ile-109, Val-112–Val-132, Leu-153–Ser-173, Phe-196–Thr-216, Leu-228–Leu-248, and Gly-258–Gly-278.

It belongs to the UppP family.

It localises to the cell inner membrane. It catalyses the reaction di-trans,octa-cis-undecaprenyl diphosphate + H2O = di-trans,octa-cis-undecaprenyl phosphate + phosphate + H(+). Its function is as follows. Catalyzes the dephosphorylation of undecaprenyl diphosphate (UPP). Confers resistance to bacitracin. The sequence is that of Undecaprenyl-diphosphatase from Chlorobaculum tepidum (strain ATCC 49652 / DSM 12025 / NBRC 103806 / TLS) (Chlorobium tepidum).